The primary structure comprises 787 residues: Integrin beta-6 (787 aa).

The first 21 residues, 1 to 21 (MGIELVCLFLLLLGRNDHVQG), serve as a signal peptide directing secretion. One can recognise a PSI domain in the interval 22–71 (GCAWGGAESCSDCLLTGPHCAWCSQENFTHLSGAGERCDTPANLLAKGCQ). The Extracellular segment spans residues 22–708 (GCAWGGAESC…KDCPKPPNIP (687 aa)). 19 cysteine pairs are disulfide-bonded: cysteine 23/cysteine 41, cysteine 31/cysteine 454, cysteine 34/cysteine 59, cysteine 44/cysteine 70, cysteine 197/cysteine 204, cysteine 252/cysteine 293, cysteine 394/cysteine 406, cysteine 426/cysteine 452, cysteine 456/cysteine 476, cysteine 467/cysteine 479, cysteine 481/cysteine 490, cysteine 492/cysteine 519, cysteine 502/cysteine 517, cysteine 511/cysteine 522, cysteine 524/cysteine 537, cysteine 539/cysteine 560, cysteine 544/cysteine 558, cysteine 552/cysteine 563, and cysteine 565/cysteine 574. Residues asparagine 48 and asparagine 97 are each glycosylated (N-linked (GlcNAc...) asparagine). Positions 131-371 (YPVDLYYLMD…QLIISAYEEL (241 aa)) constitute a VWFA domain. Mg(2+) contacts are provided by aspartate 140, serine 142, and serine 144. Ca(2+) is bound by residues serine 144, aspartate 147, aspartate 148, and glutamate 179. Ca(2+)-binding residues include asparagine 235, aspartate 237, proline 239, and glutamate 240. Position 240 (glutamate 240) interacts with Mg(2+). Asparagine 260 carries N-linked (GlcNAc...) asparagine glycosylation. Residues aspartate 271 and lysine 355 each coordinate Ca(2+). The N-linked (GlcNAc...) asparagine glycan is linked to asparagine 387. Asparagine 418 carries an N-linked (GlcNAc...) asparagine glycan. I-EGF domains follow at residues 456–491 (CQRE…PHCE), 492–538 (CGED…PYCQ), 539–575 (CDNF…EYCN), and 576–615 (CTTN…PTCE). N-linked (GlcNAc...) asparagine glycosylation is found at asparagine 463 and asparagine 471. The N-linked (GlcNAc...) asparagine glycan is linked to asparagine 541. An N-linked (GlcNAc...) asparagine glycan is attached at asparagine 575. Cystine bridges form between cysteine 576–cysteine 599, cysteine 583–cysteine 597, cysteine 591–cysteine 602, cysteine 604–cysteine 614, cysteine 617–cysteine 620, cysteine 624–cysteine 669, cysteine 630–cysteine 649, cysteine 633–cysteine 645, and cysteine 677–cysteine 701. A helical transmembrane segment spans residues 709–729 (MIMLGVSLAILLIGVVLLCIW). The interaction with HAX1 stretch occupies residues 730 to 757 (KLLVSFHDRKEVAKFEAERSKAKWQTGT). Residues 730 to 787 (KLLVSFHDRKEVAKFEAERSKAKWQTGTNPLYRGSTSTFKNVTYKHREKHKAGLSSDG) lie on the Cytoplasmic side of the membrane.

It belongs to the integrin beta chain family. In terms of assembly, heterodimer of an alpha and a beta subunit. Interacts with FLNB. Interacts with HAX1. ITGAV:ITGB6 interacts with FBN1. ITGAV:ITGB6 interacts with TGFB1.

It is found in the cell membrane. It localises to the cell junction. The protein resides in the focal adhesion. In terms of biological role, integrin alpha-V:beta-6 (ITGAV:ITGB6) is a receptor for fibronectin and cytotactin. It recognizes the sequence R-G-D in its ligands. ITGAV:ITGB6 acts as a receptor for fibrillin-1 (FBN1) and mediates R-G-D-dependent cell adhesion to FBN1. Integrin alpha-V:beta-6 (ITGAV:ITGB6) mediates R-G-D-dependent release of transforming growth factor beta-1 (TGF-beta-1) from regulatory Latency-associated peptide (LAP), thereby playing a key role in TGF-beta-1 activation. In Mus musculus (Mouse), this protein is Integrin beta-6 (Itgb6).